Reading from the N-terminus, the 477-residue chain is Actin-related protein 7 (477 aa).

Belongs to the actin family. Forms a heterodimer with ARP9. Interacts with NPL6. Component of the two forms of the RSC complex composed of at least either RSC1 or RSC2, and ARP7, ARP9, LDB7, NPL6, RSC3, RSC30, RSC4, RSC58, RSC6, RSC8, RSC9, SFH1, STH1, HTL1 and probably RTT102. The complexes interact with histone and histone variant components of centromeric chromatin. Component of the SWI/SNF global transcription activator complex. The 1.14 MDa SWI/SNF complex is composed of 11 different subunits: one copy each of SWI1, SNF2/SWI2, SNF5, SNF12/SWP73, ARP7/SWP61, ARP9/SWP59; two copies each of SWI3, SNF6, SNF11, SWP82; and three copies of TAF14/SWP29.

The protein resides in the nucleus. In terms of biological role, component of the chromatin structure remodeling complex (RSC), which is involved in transcription regulation and nucleosome positioning. RSC is responsible for the transfer of a histone octamer from a nucleosome core particle to naked DNA. The reaction requires ATP and involves an activated RSC-nucleosome intermediate. Remodeling reaction also involves DNA translocation, DNA twist and conformational change. As a reconfigurer of centromeric and flanking nucleosomes, RSC complex is required both for proper kinetochore function in chromosome segregation and, via a PKC1-dependent signaling pathway, for organization of the cellular cytoskeleton. This subunit is involved in transcriptional regulation. Heterodimer of ARP7 and ARP9 functions with HMG box proteins to facilitate proper chromatin architecture. Heterodimer formation is necessary for assembly into RSC complex. Part of the SWI/SNF complex, an ATP-dependent chromatin remodeling complex, is required for the positive and negative regulation of gene expression of a large number of genes. It changes chromatin structure by altering DNA-histone contacts within a nucleosome, leading eventually to a change in nucleosome position, thus facilitating or repressing binding of gene-specific transcription factors. The protein is Actin-related protein 7 (ARP7) of Saccharomyces cerevisiae (strain ATCC 204508 / S288c) (Baker's yeast).